An 86-amino-acid chain; its full sequence is uncharacterized protein (86 aa).

This is an uncharacterized protein from Bacillus subtilis (strain 168).